Here is a 459-residue protein sequence, read N- to C-terminus: Bifunctional protein GlmU (459 aa).

Positions 1 to 230 are pyrophosphorylase; sequence MSNRFAVILA…FDETLGVNDR (230 aa). UDP-N-acetyl-alpha-D-glucosamine-binding positions include 9 to 12, Lys23, Gln73, and 78 to 79; these read LAAG and GT. Residue Asp103 coordinates Mg(2+). Residues Gly140, Glu155, Asn170, and Asn228 each contribute to the UDP-N-acetyl-alpha-D-glucosamine site. Asn228 is a Mg(2+) binding site. Positions 231–251 are linker; it reads VALSQAEIIMKNRINRKNMVN. An N-acetyltransferase region spans residues 252 to 459; sequence GVTIIDPSNT…VDQLLNKKKS (208 aa). UDP-N-acetyl-alpha-D-glucosamine-binding residues include Arg333 and Lys351. His363 serves as the catalytic Proton acceptor. UDP-N-acetyl-alpha-D-glucosamine contacts are provided by Tyr366 and Asn377. Acetyl-CoA contacts are provided by residues 386 to 387, Ala423, and Arg440; that span reads NY.

The protein in the N-terminal section; belongs to the N-acetylglucosamine-1-phosphate uridyltransferase family. It in the C-terminal section; belongs to the transferase hexapeptide repeat family. Homotrimer. Mg(2+) serves as cofactor.

The protein resides in the cytoplasm. The enzyme catalyses alpha-D-glucosamine 1-phosphate + acetyl-CoA = N-acetyl-alpha-D-glucosamine 1-phosphate + CoA + H(+). The catalysed reaction is N-acetyl-alpha-D-glucosamine 1-phosphate + UTP + H(+) = UDP-N-acetyl-alpha-D-glucosamine + diphosphate. Its pathway is nucleotide-sugar biosynthesis; UDP-N-acetyl-alpha-D-glucosamine biosynthesis; N-acetyl-alpha-D-glucosamine 1-phosphate from alpha-D-glucosamine 6-phosphate (route II): step 2/2. It functions in the pathway nucleotide-sugar biosynthesis; UDP-N-acetyl-alpha-D-glucosamine biosynthesis; UDP-N-acetyl-alpha-D-glucosamine from N-acetyl-alpha-D-glucosamine 1-phosphate: step 1/1. It participates in bacterial outer membrane biogenesis; LPS lipid A biosynthesis. In terms of biological role, catalyzes the last two sequential reactions in the de novo biosynthetic pathway for UDP-N-acetylglucosamine (UDP-GlcNAc). The C-terminal domain catalyzes the transfer of acetyl group from acetyl coenzyme A to glucosamine-1-phosphate (GlcN-1-P) to produce N-acetylglucosamine-1-phosphate (GlcNAc-1-P), which is converted into UDP-GlcNAc by the transfer of uridine 5-monophosphate (from uridine 5-triphosphate), a reaction catalyzed by the N-terminal domain. In Bacillus cereus (strain ATCC 14579 / DSM 31 / CCUG 7414 / JCM 2152 / NBRC 15305 / NCIMB 9373 / NCTC 2599 / NRRL B-3711), this protein is Bifunctional protein GlmU.